The following is an 893-amino-acid chain: Nitrate reductase [NADPH] (893 aa).

The disordered stretch occupies residues 1–83; the sequence is MSVTTQQPAV…KPTPDAHVPR (83 aa). The segment covering 55-65 has biased composition (pro residues); it reads PDFPLPPPANP. Residues 71-83 are compositionally biased toward basic and acidic residues; the sequence is DIDKPTPDAHVPR. C170 lines the Mo-molybdopterin pocket. Positions 536 to 611 constitute a Cytochrome b5 heme-binding domain; that stretch reads NRIVELDELK…MPAYHIGTLS (76 aa). Residues H571 and H594 each coordinate heme. One can recognise an FAD-binding FR-type domain in the interval 641 to 752; the sequence is RTWSKALLSS…KGPIGKFEYL (112 aa). Residues 695-698, 712-716, 726-728, S776, and T779 each bind FAD; these read RSYT, LIKIY, and KMT. 863-872 serves as a coordination point for NADP(+); sequence LVLVCGPEGL.

This sequence belongs to the nitrate reductase family. As to quaternary structure, homodimer. FAD is required as a cofactor. The cofactor is heme. Mo-molybdopterin serves as cofactor.

It carries out the reaction nitrite + NADP(+) + H2O = nitrate + NADPH + H(+). In terms of biological role, nitrate reductase is a key enzyme involved in the first step of nitrate assimilation in plants, fungi and bacteria. This chain is Nitrate reductase [NADPH] (NIAD), found in Leptosphaeria maculans (Blackleg fungus).